The sequence spans 540 residues: Glucose-6-phosphate isomerase (540 aa).

Catalysis depends on glutamate 350, which acts as the Proton donor. Catalysis depends on residues histidine 381 and lysine 503.

It belongs to the GPI family.

It localises to the cytoplasm. The catalysed reaction is alpha-D-glucose 6-phosphate = beta-D-fructose 6-phosphate. It participates in carbohydrate biosynthesis; gluconeogenesis. It functions in the pathway carbohydrate degradation; glycolysis; D-glyceraldehyde 3-phosphate and glycerone phosphate from D-glucose: step 2/4. In terms of biological role, catalyzes the reversible isomerization of glucose-6-phosphate to fructose-6-phosphate. This is Glucose-6-phosphate isomerase from Burkholderia pseudomallei (strain 1710b).